An 886-amino-acid polypeptide reads, in one-letter code: Valine--tRNA ligase (886 aa).

Positions 53 to 63 (PNVTGSLHMGH) match the 'HIGH' region motif. Positions 540–544 (KMSKS) match the 'KMSKS' region motif. Position 543 (lysine 543) interacts with ATP. Positions 820 to 851 (IDVAAERRRMEKDLAAAQKELASTAAKLANAD) form a coiled coil.

This sequence belongs to the class-I aminoacyl-tRNA synthetase family. ValS type 1 subfamily. As to quaternary structure, monomer.

It localises to the cytoplasm. The enzyme catalyses tRNA(Val) + L-valine + ATP = L-valyl-tRNA(Val) + AMP + diphosphate. In terms of biological role, catalyzes the attachment of valine to tRNA(Val). As ValRS can inadvertently accommodate and process structurally similar amino acids such as threonine, to avoid such errors, it has a 'posttransfer' editing activity that hydrolyzes mischarged Thr-tRNA(Val) in a tRNA-dependent manner. This Mycobacterium leprae (strain TN) protein is Valine--tRNA ligase.